The chain runs to 326 residues: MTMDDLDLRLLDGFQRDLPLETRPFAAIANRLNTSEAEVIARLARLRDEGLIARIGATCRPNTAGASTLAALRVPVRRIDKVAALVGAEPGVNHSYLREGSDWNLWFVATAPDAEALEESLVRIETATGLVPLSLPLVRAFNIDLGFPLIGPRRAMALDRPTDLDVLRPRDKALMQALTTGLALVPRPFVALGQALGRSEAEVISRIRALAAARILTRVGVIVRHRALGWCENAMVVWRLPEPAVEAAGTALAAVPGVTLCYQRRTVPGLWNWPLFCMIHARSRAEAMEVLVQARALPELQGVPHRILFSTRCFRQRGAVIAEVAA.

Belongs to the Ahb/Nir family. Forms a complex composed of NirDL, NirG and NirH. All proteins are required for the total conversion of siroheme to didecarboxysiroheme.

It catalyses the reaction siroheme + 2 H(+) = 12,18-didecarboxysiroheme + 2 CO2. It participates in porphyrin-containing compound metabolism. In terms of biological role, involved in heme d1 biosynthesis. Catalyzes the decarboxylation of siroheme into didecarboxysiroheme. Siroheme is probably decarboxylated to monodecarboxysiroheme, which is in turn decarboxylated to didecarboxysiroheme. This chain is Siroheme decarboxylase NirDL subunit, found in Paracoccus pantotrophus (Thiosphaera pantotropha).